The chain runs to 255 residues: Phosphatidylglycerol--prolipoprotein diacylglyceryl transferase (255 aa).

Transmembrane regions (helical) follow at residues 15–35 (WYGIMIALGVLAALILANLNC), 46–66 (IDVFLISFPLAIIGARVYYVV), and 84–104 (LGGLAIHGGIIFGLGAAYIVS). Position 130 (Arg130) interacts with a 1,2-diacyl-sn-glycero-3-phospho-(1'-sn-glycerol). Transmembrane regions (helical) follow at residues 169–189 (PTFLYESLWDLIVCIILVYIF), 196–216 (GTVICTYVGLYSLGRFFIEGL), and 228–248 (VAQLVSFIGIVLSISFFVYLK).

Belongs to the Lgt family.

Its subcellular location is the cell membrane. It catalyses the reaction L-cysteinyl-[prolipoprotein] + a 1,2-diacyl-sn-glycero-3-phospho-(1'-sn-glycerol) = an S-1,2-diacyl-sn-glyceryl-L-cysteinyl-[prolipoprotein] + sn-glycerol 1-phosphate + H(+). Its pathway is protein modification; lipoprotein biosynthesis (diacylglyceryl transfer). Functionally, catalyzes the transfer of the diacylglyceryl group from phosphatidylglycerol to the sulfhydryl group of the N-terminal cysteine of a prolipoprotein, the first step in the formation of mature lipoproteins. The sequence is that of Phosphatidylglycerol--prolipoprotein diacylglyceryl transferase from Clostridium kluyveri (strain NBRC 12016).